The primary structure comprises 456 residues: N(6)-adenosine-methyltransferase non-catalytic subunit METTL14 (456 aa).

The disordered stretch occupies residues 43–74; it reads EIAETRETSRASYDTSAAVSKRKLPEEGKADE. A compositionally biased stretch (basic and acidic residues) spans 65 to 74; that stretch reads KLPEEGKADE. 2 interaction with METTL3 regions span residues 135 to 136 and 237 to 238; these read RD and SG. Positions 245-254 are positively charged region required for RNA-binding; it reads RMCLRKWGFR. Interaction with METTL3 stretches follow at residues 255–258 and 278–287; these read RSED and KAIFQRTKEH. Residues 297–298 are positively charged region required for RNA-binding; it reads HR. Residues 308 to 312 form an interaction with METTL3 region; sequence NVDID. A disordered region spans residues 395–456; the sequence is LRPKTPPPKS…GPHRGVFAPR (62 aa). Residues 410 to 421 show a composition bias toward gly residues; sequence ASRGGGRGGASA. Residues 423 to 441 are compositionally biased toward basic and acidic residues; it reads RGERGRERNRGSFRGDRGN.

This sequence belongs to the MT-A70-like family. Heterodimer; heterodimerizes with mettl3 to form an antiparallel heterodimer that constitutes an active methyltransferase. Component of the WMM complex, a N6-methyltransferase complex composed of a catalytic subcomplex, named MAC, and of an associated subcomplex, named MACOM. The MAC subcomplex is composed of mettl3 and mettl14.

The protein resides in the nucleus. The METTL3-METTL14 heterodimer forms a N6-methyltransferase complex that methylates adenosine residues at the N(6) position of some mRNAs and regulates the circadian clock, differentiation of embryonic stem cells and cortical neurogenesis. In the heterodimer formed with mettl3, mettl14 constitutes the RNA-binding scaffold that recognizes the substrate rather than the catalytic core. N6-methyladenosine (m6A), which takes place at the 5'-[AG]GAC-3' consensus sites of some mRNAs, plays a role in mRNA stability and processing. This chain is N(6)-adenosine-methyltransferase non-catalytic subunit METTL14 (mettl14), found in Xenopus laevis (African clawed frog).